Here is a 236-residue protein sequence, read N- to C-terminus: Ubiquinone biosynthesis O-methyltransferase (236 aa).

The S-adenosyl-L-methionine site is built by arginine 40, glycine 59, aspartate 80, and leucine 124.

It belongs to the methyltransferase superfamily. UbiG/COQ3 family.

It carries out the reaction a 3-demethylubiquinol + S-adenosyl-L-methionine = a ubiquinol + S-adenosyl-L-homocysteine + H(+). It catalyses the reaction a 3-(all-trans-polyprenyl)benzene-1,2-diol + S-adenosyl-L-methionine = a 2-methoxy-6-(all-trans-polyprenyl)phenol + S-adenosyl-L-homocysteine + H(+). It functions in the pathway cofactor biosynthesis; ubiquinone biosynthesis. Its function is as follows. O-methyltransferase that catalyzes the 2 O-methylation steps in the ubiquinone biosynthetic pathway. The sequence is that of Ubiquinone biosynthesis O-methyltransferase from Saccharophagus degradans (strain 2-40 / ATCC 43961 / DSM 17024).